Reading from the N-terminus, the 145-residue chain is MKENFSIMFIHSIFLILIIFIYSNETIAQVTDDENCETLQSEVHITKDEYDEIGRLKRTCSGDISVTKCEGFCNSQVQPSVASTTGFSKECYCCRESYLKERHITLHHCYDADGIKLMNEENGVMEIKIREPVECKCIKCGDISQ.

An N-terminal signal peptide occupies residues 1–28 (MKENFSIMFIHSIFLILIIFIYSNETIA). 5 cysteine pairs are disulfide-bonded: C36-C94, C60-C109, C69-C135, C73-C137, and C91-C140. The region spanning 36–131 (CETLQSEVHI…NGVMEIKIRE (96 aa)) is the CTCK domain.

As to quaternary structure, heterodimer of burs and pburs.

Its subcellular location is the secreted. Functionally, final heterodimeric neurohormone released at the end of the molting cycle, involved in the sclerotization (tanning) of the insect cuticle, melanization and wing spreading. The protein is Partner of bursicon (pburs) of Apis mellifera (Honeybee).